A 544-amino-acid chain; its full sequence is Protein angel homolog 2 (544 aa).

The protein belongs to the CCR4/nocturin family.

The protein is Protein angel homolog 2 (ANGEL2) of Bos taurus (Bovine).